The following is a 135-amino-acid chain: Nucleoside diphosphate kinase (135 aa).

Positions 10, 58, 86, 92, 103, and 113 each coordinate ATP. The Pros-phosphohistidine intermediate role is filled by histidine 116.

This sequence belongs to the NDK family. As to quaternary structure, homotetramer. Mg(2+) serves as cofactor.

It localises to the cytoplasm. The enzyme catalyses a 2'-deoxyribonucleoside 5'-diphosphate + ATP = a 2'-deoxyribonucleoside 5'-triphosphate + ADP. It catalyses the reaction a ribonucleoside 5'-diphosphate + ATP = a ribonucleoside 5'-triphosphate + ADP. Functionally, major role in the synthesis of nucleoside triphosphates other than ATP. The ATP gamma phosphate is transferred to the NDP beta phosphate via a ping-pong mechanism, using a phosphorylated active-site intermediate. The polypeptide is Nucleoside diphosphate kinase (Nocardioides sp. (strain ATCC BAA-499 / JS614)).